Reading from the N-terminus, the 911-residue chain is Alpha-actinin-4 (911 aa).

Residues 1 to 30 (MVDYHAASQSYQYGPSSAGNGAGGGGSMGD) are disordered. The actin-binding stretch occupies residues 1–269 (MVDYHAASQS…YVSSFYHAFS (269 aa)). The segment at 12–26 (QYGPSSAGNGAGGGG) is interaction with VCL. Tyrosine 31 is subject to Phosphotyrosine. The tract at residues 40–61 (RDLLLDPAWEKQQRKTFTAWCN) is interaction with VCL. Calponin-homology (CH) domains follow at residues 50-154 (KQQR…LRFA) and 163-269 (TSAK…HAFS). The LXXLL motif signature appears at 84–88 (LMLLL). Residues 108–126 (KINNVNKALDFIASKGVKL) form an interaction with VCL region. Lysine 114 bears the N6-acetyllysine mark. The tract at residues 177–192 (TAPYKNVNVQNFHISW) is polyphosphoinositide (PIP2)-binding. Lysine 214 carries the post-translational modification N6-acetyllysine. A Phosphothreonine modification is found at threonine 249. 4 Spectrin repeats span residues 293-403 (HLME…WLLN), 413-518 (HLAE…ALEK), 528-639 (QLHL…ALLE), and 649-752 (HLRR…EVEN). An N6-acetyllysine mark is found at lysine 592 and lysine 625. Serine 696 is subject to Phosphoserine. The tract at residues 736–911 (WEQLLTTIAR…STALYGESDL (176 aa)) is mediates interaction with MICALL2. 2 EF-hand domains span residues 765-800 (EQMQEFRASFNHFDKDHGGALGPEEFKACLISLGYD) and 806-841 (QGEAEFNRIMSLVDPNHSGLVTFQAFIDFMSRETTD). Residue aspartate 778 participates in Ca(2+) binding. Lysine 779 is modified (N6-acetyllysine). Ca(2+) is bound by residues aspartate 780 and glutamate 789. An N6-acetyllysine modification is found at lysine 859. A Phosphoserine modification is found at serine 909.

Belongs to the alpha-actinin family. In terms of assembly, homodimer; antiparallel. Identified in a IGF2BP1-dependent mRNP granule complex containing untranslated mRNAs. Component of the CART complex, at least composed of ACTN4, HGS/HRS, MYO5B and TRIM3. Binds TRIM3 at the N-terminus. Interacts with MAGI1. Interacts with PDLIM2. Identified in a complex with CASK, IQGAP1, MAGI2, NPHS1, SPTAN1 and SPTBN1. Interacts with MICALL2 (preferentially in opened conformation); stimulated by RAB13 activation. Interacts with PPARG and RARA. Binds to VCL; this interaction triggers VCL conformational changes. Interacts with SEPTIN14. Interacts with IGSF8.

It is found in the nucleus. Its subcellular location is the cytoplasm. The protein localises to the cell junction. The protein resides in the cytoskeleton. It localises to the stress fiber. It is found in the perinuclear region. Its function is as follows. F-actin cross-linking protein which is thought to anchor actin to a variety of intracellular structures. This is a bundling protein. Probably involved in vesicular trafficking via its association with the CART complex. The CART complex is necessary for efficient transferrin receptor recycling but not for EGFR degradation. Involved in tight junction assembly in epithelial cells probably through interaction with MICALL2. Links MICALL2 to the actin cytoskeleton and recruits it to the tight junctions. May also function as a transcriptional coactivator, stimulating transcription mediated by the nuclear hormone receptors PPARG and RARA. Association with IGSF8 regulates the immune synapse formation and is required for efficient T-cell activation. This is Alpha-actinin-4 from Pongo abelii (Sumatran orangutan).